A 671-amino-acid chain; its full sequence is Diguanylate cyclase DgcP (671 aa).

2 disordered regions span residues Ala-204–Pro-223 and Glu-278–Pro-298. Position 549 (Asp-549) interacts with Mg(2+). Substrate contacts are provided by Asn-557, His-562, and Asp-566. Position 592 (Glu-592) interacts with Mg(2+). Glu-592 is a catalytic residue.

As to quaternary structure, homodimer. Mg(2+) is required as a cofactor.

It localises to the cell inner membrane. The enzyme catalyses 2 GTP = 3',3'-c-di-GMP + 2 diphosphate. Its pathway is purine metabolism; 3',5'-cyclic di-GMP biosynthesis. Catalyzes the synthesis of cyclic-di-GMP (c-di-GMP) via the condensation of 2 GTP molecules. Cyclic-di-GMP is a second messenger which controls cell surface-associated traits in bacteria. Localizes at the cell poles through interaction with FimV where it increases the local pools of c-di-GMP. The chain is Diguanylate cyclase DgcP (dgcP) from Pseudomonas aeruginosa (strain ATCC 15692 / DSM 22644 / CIP 104116 / JCM 14847 / LMG 12228 / 1C / PRS 101 / PAO1).